A 91-amino-acid polypeptide reads, in one-letter code: DNA-directed RNA polymerase subunit omega (91 aa).

This sequence belongs to the RNA polymerase subunit omega family. The RNAP catalytic core consists of 2 alpha, 1 beta, 1 beta' and 1 omega subunit. When a sigma factor is associated with the core the holoenzyme is formed, which can initiate transcription.

It carries out the reaction RNA(n) + a ribonucleoside 5'-triphosphate = RNA(n+1) + diphosphate. Promotes RNA polymerase assembly. Latches the N- and C-terminal regions of the beta' subunit thereby facilitating its interaction with the beta and alpha subunits. This is DNA-directed RNA polymerase subunit omega from Syntrophus aciditrophicus (strain SB).